A 202-amino-acid polypeptide reads, in one-letter code: Glycerol-3-phosphate acyltransferase 1 (202 aa).

5 helical membrane-spanning segments follow: residues 8–28, 85–105, 122–142, 146–166, and 173–190; these read AGMI…MSTG, LSLT…IWPL, ILVV…FVLA, QFTL…LIMA, and AGLA…RKNI.

Belongs to the PlsY family. As to quaternary structure, probably interacts with PlsX.

The protein localises to the cell membrane. It catalyses the reaction an acyl phosphate + sn-glycerol 3-phosphate = a 1-acyl-sn-glycero-3-phosphate + phosphate. The protein operates within lipid metabolism; phospholipid metabolism. Functionally, catalyzes the transfer of an acyl group from acyl-phosphate (acyl-PO(4)) to glycerol-3-phosphate (G3P) to form lysophosphatidic acid (LPA). This enzyme utilizes acyl-phosphate as fatty acyl donor, but not acyl-CoA or acyl-ACP. The chain is Glycerol-3-phosphate acyltransferase 1 from Desulfitobacterium hafniense (strain Y51).